A 315-amino-acid polypeptide reads, in one-letter code: Periplasmic [NiFeSe] hydrogenase small subunit (315 aa).

The segment at residues 1–32 (MSLSRREFVKLCSAGVAGLGISQIYHPGIVHA) is a signal peptide (tat-type signal). 12 residues coordinate [4Fe-4S] cluster: Cys50, Cys53, Cys158, Cys196, His240, Cys243, Cys263, Cys269, Cys278, Cys290, Cys296, and Cys299.

This sequence belongs to the [NiFe]/[NiFeSe] hydrogenase small subunit family. As to quaternary structure, heterodimer of a large and a small subunit. [4Fe-4S] cluster serves as cofactor. Predicted to be exported by the Tat system. The position of the signal peptide cleavage has been experimentally proven.

It localises to the periplasm. The catalysed reaction is H2 + A = AH2. This chain is Periplasmic [NiFeSe] hydrogenase small subunit, found in Desulfomicrobium baculatum (Desulfovibrio baculatus).